The chain runs to 364 residues: Alanine racemase (364 aa).

Catalysis depends on Lys39, which acts as the Proton acceptor; specific for D-alanine. Lys39 carries the post-translational modification N6-(pyridoxal phosphate)lysine. Residue Arg137 participates in substrate binding. Tyr258 acts as the Proton acceptor; specific for L-alanine in catalysis. A substrate-binding site is contributed by Met306.

It belongs to the alanine racemase family. The cofactor is pyridoxal 5'-phosphate.

It carries out the reaction L-alanine = D-alanine. It participates in amino-acid biosynthesis; D-alanine biosynthesis; D-alanine from L-alanine: step 1/1. Functionally, catalyzes the interconversion of L-alanine and D-alanine. May also act on other amino acids. The sequence is that of Alanine racemase (alr) from Methylobacterium sp. (strain 4-46).